Here is a 161-residue protein sequence, read N- to C-terminus: Tick receptor for ospA (161 aa).

As to quaternary structure, interacts with ospA protein from B.burgdorferi. Glycosylated. As to expression, specifically expressed in gut. Localizes predominantly in the intercellular spaces and luminal surface of the gut. In the gut, it localizes along tight junctions. Not expressed in salivary gland or hemolymph.

It is found in the cell membrane. Its function is as follows. Serves as a receptor for ospA protein of B.burgdorferi, the Lyme disease agent. Required for spirochetal colonization. Essential for pathogen adherence to the vector. The protein is Tick receptor for ospA (TROSPA) of Ixodes scapularis (Black-legged tick).